Here is a 41-residue protein sequence, read N- to C-terminus: Probable cinnamyl alcohol dehydrogenase 2 (41 aa).

Belongs to the zinc-containing alcohol dehydrogenase family. It depends on Zn(2+) as a cofactor.

It carries out the reaction (E)-cinnamyl alcohol + NADP(+) = (E)-cinnamaldehyde + NADPH + H(+). The catalysed reaction is (E)-coniferol + NADP(+) = (E)-coniferaldehyde + NADPH + H(+). It catalyses the reaction (E)-sinapyl alcohol + NADP(+) = (E)-sinapaldehyde + NADPH + H(+). The enzyme catalyses (E)-4-coumaroyl alcohol + NADP(+) = (E)-4-coumaraldehyde + NADPH + H(+). It carries out the reaction (E)-caffeyl alcohol + NADP(+) = (E)-caffeyl aldehyde + NADPH + H(+). It participates in aromatic compound metabolism; phenylpropanoid biosynthesis. Functionally, involved in lignin biosynthesis. Catalyzes the final step specific for the production of lignin monomers, like coniferyl alcohol, sinapyl alcohol and 4-coumaryl alcohol. This chain is Probable cinnamyl alcohol dehydrogenase 2, found in Pseudotsuga menziesii (Douglas-fir).